A 341-amino-acid polypeptide reads, in one-letter code: Retinol dehydrogenase 10-A (341 aa).

Residues 3-23 form a helical; Signal-anchor membrane-spanning segment; it reads IVLEFFLVTFRVLWAFVLAAG. 40 to 64 provides a ligand contact to NADP(+); sequence LITGAGSGLGRLFALEFARRRAQLV. Substrate is bound at residue S197. The active-site Proton acceptor is the Y210.

Belongs to the short-chain dehydrogenases/reductases (SDR) family.

It localises to the microsome membrane. The protein localises to the endoplasmic reticulum membrane. The enzyme catalyses all-trans-retinol + NADP(+) = all-trans-retinal + NADPH + H(+). It participates in cofactor metabolism; retinol metabolism. Its function is as follows. Retinol dehydrogenase with a clear preference for NADP. Converts all-trans-retinol to all-trans-retinal. Has no detectable activity towards 11-cis-retinol, 9-cis-retinol and 13-cis-retinol. The sequence is that of Retinol dehydrogenase 10-A (rdh10-a) from Xenopus laevis (African clawed frog).